The chain runs to 427 residues: Trigger factor (427 aa).

Positions 163 to 248 constitute a PPIase FKBP-type domain; sequence GDTVVIDFVG…VHEVKAKEVP (86 aa).

This sequence belongs to the FKBP-type PPIase family. Tig subfamily.

The protein resides in the cytoplasm. The catalysed reaction is [protein]-peptidylproline (omega=180) = [protein]-peptidylproline (omega=0). Functionally, involved in protein export. Acts as a chaperone by maintaining the newly synthesized protein in an open conformation. Functions as a peptidyl-prolyl cis-trans isomerase. This is Trigger factor from Streptococcus equi subsp. zooepidemicus (strain H70).